The primary structure comprises 363 residues: NAD(P)H-quinone oxidoreductase subunit 1, chloroplastic (363 aa).

Helical transmembrane passes span 26–46, 96–116, 127–147, 175–195, 203–223, 253–273, 303–323, and 343–363; these read FVWI…GVLV, WLFA…FLVI, ISIG…GLLV, LALC…IEIV, ILGW…ISAL, FGLF…FVTI, GLIA…ASIL, and FLLP…LALL.

It belongs to the complex I subunit 1 family. NDH is composed of at least 16 different subunits, 5 of which are encoded in the nucleus.

It is found in the plastid. The protein localises to the chloroplast thylakoid membrane. It catalyses the reaction a plastoquinone + NADH + (n+1) H(+)(in) = a plastoquinol + NAD(+) + n H(+)(out). It carries out the reaction a plastoquinone + NADPH + (n+1) H(+)(in) = a plastoquinol + NADP(+) + n H(+)(out). Its function is as follows. NDH shuttles electrons from NAD(P)H:plastoquinone, via FMN and iron-sulfur (Fe-S) centers, to quinones in the photosynthetic chain and possibly in a chloroplast respiratory chain. The immediate electron acceptor for the enzyme in this species is believed to be plastoquinone. Couples the redox reaction to proton translocation, and thus conserves the redox energy in a proton gradient. The protein is NAD(P)H-quinone oxidoreductase subunit 1, chloroplastic of Zygnema circumcarinatum (Green alga).